The primary structure comprises 380 residues: MIVQFVALLLLNLLQIIAAESSHTNNWAVLISTSRFWFNYRHTANVLGIYRSVKRLGIPDSQIILMIADDYACNSRNLFPGTVFDNADRALDLYGEEIEIDYKGYEVTVEAFIRLLTERVPENTPASKRLLTNERSNILIYMTGHGGDGFIKFQDAEELSSEDLADAIEQIHQHKRYNEILFMVDTCQANSLYTKIYSPNVLAIGSSEVGTSSYSHHADIDIGVAVIDRFTFSNLEFLENRVDSKSKLTMQDLINSYNPYEIHSTPGVQPINLRRSPDDILITDFFGNVRDIELHSEKINWMLPGENTTKPSIKRNSFVFQAQNDMQDDGKGFGISNLKSFLPPTRELKYKKHPISRIISAVVCISFSIGFPYYASKYLK.

The first 19 residues, 1 to 19 (MIVQFVALLLLNLLQIIAA), serve as a signal peptide directing secretion. Over 20-354 (ESSHTNNWAV…TRELKYKKHP (335 aa)) the chain is Lumenal. Active-site residues include His-145 and Cys-187. Asn-307 is a glycosylation site (N-linked (GlcNAc...) asparagine). The chain crosses the membrane as a helical span at residues 355-375 (ISRIISAVVCISFSIGFPYYA). Residues 376-380 (SKYLK) are Cytoplasmic-facing.

Belongs to the peptidase C13 family. Forms a complex with PIG-T homolog, PIG-U homolog and PIG-S homolog. The disulfide bond between PIGK/GPI8 and PIGT is important for normal enzyme activity.

It is found in the endoplasmic reticulum membrane. It participates in glycolipid biosynthesis; glycosylphosphatidylinositol-anchor biosynthesis. Mediates GPI anchoring in the endoplasmic reticulum, by replacing a protein's C-terminal GPI attachment signal peptide with a pre-assembled GPI. During this transamidation reaction, the GPI transamidase forms a carbonyl intermediate with the substrate protein. This chain is GPI-anchor transamidase (gpi8), found in Schizosaccharomyces pombe (strain 972 / ATCC 24843) (Fission yeast).